Reading from the N-terminus, the 305-residue chain is Elongation factor Ts (305 aa).

Positions 79-82 (TDFV) are involved in Mg(2+) ion dislocation from EF-Tu.

Belongs to the EF-Ts family.

The protein resides in the cytoplasm. Its function is as follows. Associates with the EF-Tu.GDP complex and induces the exchange of GDP to GTP. It remains bound to the aminoacyl-tRNA.EF-Tu.GTP complex up to the GTP hydrolysis stage on the ribosome. This chain is Elongation factor Ts, found in Brucella suis biovar 1 (strain 1330).